The primary structure comprises 135 residues: S-protein homolog 29 (135 aa).

An N-terminal signal peptide occupies residues Met1–Gly24. Asn110 carries N-linked (GlcNAc...) asparagine glycosylation.

It belongs to the plant self-incompatibility (S1) protein family.

It localises to the secreted. The chain is S-protein homolog 29 from Arabidopsis thaliana (Mouse-ear cress).